The primary structure comprises 334 residues: Cytoskeleton protein RodZ (334 aa).

Residues 1 to 111 (MNTEATHDQN…LGKRRKKRDG (111 aa)) lie on the Cytoplasmic side of the membrane. The HTH cro/C1-type domain occupies 19–71 (LRNAREQLGLSQQAVAERLCLKVSTVRDIEEDKAPSDLASTFLRGYIRSYARL). A DNA-binding region (H-T-H motif) is located at residues 30–49 (QQAVAERLCLKVSTVRDIEE). Residues 112-132 (WLMSFTWLVLFVVVGLTGAWW) traverse the membrane as a helical; Signal-anchor for type II membrane protein segment. Residues 133 to 334 (WQNHKAQQEE…TLNAEPTPAQ (202 aa)) are Periplasmic-facing. The tract at residues 155 to 241 (NADKDSGQSV…PSALPTSQAG (87 aa)) is disordered. 2 stretches are compositionally biased toward low complexity: residues 170–211 (AATS…TVVA) and 219–241 (TAATSAAPAATETPSALPTSQAG).

The protein belongs to the RodZ family.

The protein resides in the cell inner membrane. In terms of biological role, cytoskeletal protein that is involved in cell-shape control through regulation of the length of the long axis. The sequence is that of Cytoskeleton protein RodZ from Salmonella agona (strain SL483).